Reading from the N-terminus, the 223-residue chain is uncharacterized protein (223 aa).

Helical transmembrane passes span Thr-25–Ala-45, Ile-46–Phe-66, Leu-78–Phe-98, Gly-105–Ala-125, Phe-140–Ser-160, Thr-161–Phe-181, and Ile-199–Met-219.

Belongs to the BI1 family.

The protein resides in the cell membrane. This is an uncharacterized protein from Vibrio cholerae serotype O1 (strain ATCC 39315 / El Tor Inaba N16961).